Consider the following 69-residue polypeptide: Large ribosomal subunit protein bL28 (69 aa).

Belongs to the bacterial ribosomal protein bL28 family.

This Desulfovibrio desulfuricans (strain ATCC 27774 / DSM 6949 / MB) protein is Large ribosomal subunit protein bL28.